The following is a 457-amino-acid chain: UDP-glycosyltransferase 708C2 (457 aa).

Catalysis depends on histidine 32, which acts as the Proton acceptor. An anthocyanidin is bound at residue histidine 32. Aspartate 129 functions as the Charge relay in the catalytic mechanism. Position 150 (threonine 150) interacts with UDP-alpha-D-glucose. The interval 279-280 is UDP; sequence NR. UDP-alpha-D-glucose-binding residues include valine 341, glutamine 343, histidine 358, tryptophan 361, asparagine 362, serine 363, and glutamate 366. Glycine 381 lines the an anthocyanidin pocket. UDP-alpha-D-glucose contacts are provided by aspartate 382 and glutamine 383.

It belongs to the UDP-glycosyltransferase family. Expressed in cotyledons. Not detected in flowers, leaves, roots and hypocotyls.

The catalysed reaction is a 3'-hydro-2'-hydroxy-beta-oxodihydrochalcone + UDP-alpha-D-glucose = a 3'-(beta-D-glucopyranosyl)-2'-hydroxy-beta-oxodihydrochalcone + UDP + H(+). In terms of biological role, UDP-glucose-dependent glucosyltransferase catalyzing the c-glucosylation of 2-hydroxyflavanones (2-hydroxynaringenin, 2-hydroxyeriodictyol and 2-hydroxypinocembrin) and phloretin. No activity with flavanones, flavones or flavonols. The chain is UDP-glycosyltransferase 708C2 from Fagopyrum esculentum (Common buckwheat).